Reading from the N-terminus, the 94-residue chain is Co-chaperonin GroES (94 aa).

This sequence belongs to the GroES chaperonin family. Heptamer of 7 subunits arranged in a ring. Interacts with the chaperonin GroEL.

It localises to the cytoplasm. Its function is as follows. Together with the chaperonin GroEL, plays an essential role in assisting protein folding. The GroEL-GroES system forms a nano-cage that allows encapsulation of the non-native substrate proteins and provides a physical environment optimized to promote and accelerate protein folding. GroES binds to the apical surface of the GroEL ring, thereby capping the opening of the GroEL channel. The polypeptide is Co-chaperonin GroES (Caldanaerobacter subterraneus subsp. tengcongensis (strain DSM 15242 / JCM 11007 / NBRC 100824 / MB4) (Thermoanaerobacter tengcongensis)).